The sequence spans 205 residues: Small ribosomal subunit protein uS5 (205 aa).

Positions 49–112 (LVDEVLDINM…VSAKINLVKV (64 aa)) constitute an S5 DRBM domain.

Belongs to the universal ribosomal protein uS5 family. In terms of assembly, part of the 30S ribosomal subunit. Contacts protein S4.

Functionally, with S4 and S12 plays an important role in translational accuracy. The chain is Small ribosomal subunit protein uS5 from Methanospirillum hungatei JF-1 (strain ATCC 27890 / DSM 864 / NBRC 100397 / JF-1).